A 146-amino-acid polypeptide reads, in one-letter code: Leghemoglobin-3 (146 aa).

Residues 2 to 146 (GFTDKQEALV…LATAIKKAMV (145 aa)) form the Globin domain. Nitrated tyrosine is present on Y29. S44 provides a ligand contact to heme b. Phosphoserine is present on S44. H61 lines the O2 pocket. Heme b-binding residues include K64, H93, and K96. A Nitrated tyrosine modification is found at Y134.

Belongs to the plant globin family. In terms of assembly, monomer. Nitrated in effective nodules and particularly in hypoxic conditions; this mechanism may play a protective role in the symbiosis by buffering toxic peroxynitrite NO(2)(-). Nitration level decrease during nodule senescence. In terms of processing, phosphorylation at Ser-44 disrupts the molecular environment of its porphyrin ring oxygen binding pocket, thus leading to a reduced oxygen consumption and to the delivery of oxygen O(2) to symbiosomes. Root nodules.

The protein localises to the cytoplasm. It localises to the cytosol. Its subcellular location is the nucleus. Functionally, leghemoglobin that reversibly binds oxygen O(2) through a pentacoordinated heme iron. In root nodules, facilitates the diffusion of oxygen to the bacteroids while preventing the bacterial nitrogenase from being inactivated by buffering dioxygen, nitric oxide and carbon monoxide, and promoting the formation of reactive oxygen species (ROS, e.g. H(2)O(2)). This role is essential for symbiotic nitrogen fixation (SNF). This chain is Leghemoglobin-3, found in Medicago sativa (Alfalfa).